The following is a 297-amino-acid chain: tRNA dimethylallyltransferase (297 aa).

10–17 (GITASGKS) contributes to the ATP binding site. 12–17 (TASGKS) is a substrate binding site. Positions 36–39 (DSKQ) are interaction with substrate tRNA.

Belongs to the IPP transferase family. As to quaternary structure, monomer. The cofactor is Mg(2+).

It carries out the reaction adenosine(37) in tRNA + dimethylallyl diphosphate = N(6)-dimethylallyladenosine(37) in tRNA + diphosphate. In terms of biological role, catalyzes the transfer of a dimethylallyl group onto the adenine at position 37 in tRNAs that read codons beginning with uridine, leading to the formation of N6-(dimethylallyl)adenosine (i(6)A). The polypeptide is tRNA dimethylallyltransferase (Wolbachia sp. subsp. Brugia malayi (strain TRS)).